Consider the following 299-residue polypeptide: Protein-methionine-sulfoxide reductase catalytic subunit MsrP (299 aa).

Residues 1–44 (MAHRWINDLTPADITPRGAWMNRRQVMAGMAGAGLAAFAGSAQA) constitute a signal peptide (tat-type signal). Mo-molybdopterin-binding positions include Asn59, 62–63 (YE), Cys117, Thr152, Asn200, Arg205, and 216–218 (SIK).

Belongs to the MsrP family. In terms of assembly, heterodimer of a catalytic subunit (MsrP) and a heme-binding subunit (MsrQ). Mo-molybdopterin serves as cofactor. Predicted to be exported by the Tat system. The position of the signal peptide cleavage has not been experimentally proven.

The protein localises to the periplasm. The enzyme catalyses L-methionyl-[protein] + a quinone + H2O = L-methionyl-(S)-S-oxide-[protein] + a quinol. It carries out the reaction L-methionyl-[protein] + a quinone + H2O = L-methionyl-(R)-S-oxide-[protein] + a quinol. Functionally, part of the MsrPQ system that repairs oxidized periplasmic proteins containing methionine sulfoxide residues (Met-O), using respiratory chain electrons. Thus protects these proteins from oxidative-stress damage caused by reactive species of oxygen and chlorine generated by the host defense mechanisms. MsrPQ is essential for the maintenance of envelope integrity under bleach stress, rescuing a wide series of structurally unrelated periplasmic proteins from methionine oxidation. The catalytic subunit MsrP is non-stereospecific, being able to reduce both (R-) and (S-) diastereoisomers of methionine sulfoxide. This is Protein-methionine-sulfoxide reductase catalytic subunit MsrP from Ruegeria pomeroyi (strain ATCC 700808 / DSM 15171 / DSS-3) (Silicibacter pomeroyi).